We begin with the raw amino-acid sequence, 249 residues long: Triosephosphate isomerase (249 aa).

2 residues coordinate substrate: asparagine 12 and lysine 14. The residue at position 14 (lysine 14) is an N6-acetyllysine. Position 68 is a 3'-nitrotyrosine (tyrosine 68). Residue serine 80 is modified to Phosphoserine. Residue histidine 96 is the Electrophile of the active site. Position 106 is a phosphoserine (serine 106). A Glycyl lysine isopeptide (Lys-Gly) (interchain with G-Cter in SUMO1) cross-link involves residue lysine 142. Lysine 149 bears the N6-succinyllysine mark. Lysine 156 bears the N6-acetyllysine; alternate mark. N6-succinyllysine; alternate is present on lysine 156. Phosphoserine is present on serine 159. The active-site Proton acceptor is the glutamate 166. The residue at position 173 (threonine 173) is a Phosphothreonine. Lysine 194 carries the N6-acetyllysine; alternate modification. An N6-succinyllysine; alternate modification is found at lysine 194. At lysine 194 the chain carries N6-methyllysine; alternate. Phosphoserine is present on serine 198. A 3'-nitrotyrosine modification is found at tyrosine 209. Position 212 is a phosphoserine (serine 212). Position 214 is a phosphothreonine (threonine 214). Serine 223 is subject to Phosphoserine. Position 238 is an N6-acetyllysine (lysine 238).

The protein belongs to the triosephosphate isomerase family. In terms of assembly, homodimer.

Its subcellular location is the cytoplasm. The catalysed reaction is dihydroxyacetone phosphate = methylglyoxal + phosphate. The enzyme catalyses D-glyceraldehyde 3-phosphate = dihydroxyacetone phosphate. The protein operates within carbohydrate degradation; glycolysis; D-glyceraldehyde 3-phosphate from glycerone phosphate: step 1/1. It participates in carbohydrate biosynthesis; gluconeogenesis. Its function is as follows. Triosephosphate isomerase is an extremely efficient metabolic enzyme that catalyzes the interconversion between dihydroxyacetone phosphate (DHAP) and D-glyceraldehyde-3-phosphate (G3P) in glycolysis and gluconeogenesis. Functionally, it is also responsible for the non-negligible production of methylglyoxal a reactive cytotoxic side-product that modifies and can alter proteins, DNA and lipids. This is Triosephosphate isomerase (TPI1) from Bos taurus (Bovine).